A 364-amino-acid polypeptide reads, in one-letter code: Cobalt-precorrin-5B C(1)-methyltransferase (364 aa).

Belongs to the CbiD family.

It carries out the reaction Co-precorrin-5B + S-adenosyl-L-methionine = Co-precorrin-6A + S-adenosyl-L-homocysteine. It participates in cofactor biosynthesis; adenosylcobalamin biosynthesis; cob(II)yrinate a,c-diamide from sirohydrochlorin (anaerobic route): step 6/10. Catalyzes the methylation of C-1 in cobalt-precorrin-5B to form cobalt-precorrin-6A. This is Cobalt-precorrin-5B C(1)-methyltransferase from Pseudomonas putida (strain ATCC 47054 / DSM 6125 / CFBP 8728 / NCIMB 11950 / KT2440).